Here is a 466-residue protein sequence, read N- to C-terminus: DNA polymerase delta subunit 3 (466 aa).

N-acetylalanine is present on alanine 2. Disordered regions lie at residues 145–218 (PAES…KEVM) and 255–466 (EQEV…FQRK). Composition is skewed to basic and acidic residues over residues 205–218 (DANK…KEVM), 255–265 (EQEVKEEKKVE), and 281–297 (DLKK…MQQK). Residue lysine 259 forms a Glycyl lysine isopeptide (Lys-Gly) (interchain with G-Cter in SUMO); alternate linkage. Lysine 259 is covalently cross-linked (Glycyl lysine isopeptide (Lys-Gly) (interchain with G-Cter in SUMO2); alternate). Lysine 262 is covalently cross-linked (Glycyl lysine isopeptide (Lys-Gly) (interchain with G-Cter in SUMO2)). A Phosphoserine modification is found at serine 308. Pro residues predominate over residues 350 to 360 (PSPPPPSPSPE). A phosphoserine mark is found at serine 407 and serine 409. Position 411 is a phosphothreonine (threonine 411). Serine 413 is subject to Phosphoserine. Residues 432-441 (VKKEPKEERK) are compositionally biased toward basic and acidic residues. Residue lysine 433 forms a Glycyl lysine isopeptide (Lys-Gly) (interchain with G-Cter in SUMO); alternate linkage. Lysine 433 is covalently cross-linked (Glycyl lysine isopeptide (Lys-Gly) (interchain with G-Cter in SUMO2); alternate). Positions 456 to 463 (QVAITGFF) match the PIP-box motif.

As to quaternary structure, component of both the DNA polymerase delta and DNA polymerase zeta complexes. The tetrameric DNA polymerase delta complex (Pol-delta4), which consists of POLD1/p125, POLD2/p50, POLD3/p66/p68 and POLD4/p12, with POLD1 bearing DNA polymerase and 3' to 5' proofreading exonuclease activities. Within this complex, directly interacts with POLD2. Following stress caused by DNA damaging agents or by replication stress, POLD4 is degraded and Pol-delta4 is converted into a trimeric form of the complex (Pol-delta3), which consists of POLD1, POLD2 and POLD3. Pol-delta3 is the major form occurring at S phase replication sites, as well as DNA damage sites. Directly interacts with PCNA, as do POLD1 and POLD4; this interaction stimulates Pol-delta polymerase activity. Component of the DNA polymerase zeta complex (POLZ), which consists of REV3L, MAD2L2, POLD2 and POLD3, with REV3L bearing DNA polymerase catalytic activity. The DNA polymerase delta complex interacts with POLDIP2; this interaction is probably mediated through direct binding to POLD2. In terms of processing, ubiquitinated, but not targeted to the proteasome. Sumoylated. Sumoylation by SUMO3 may be predominant.

It is found in the cytoplasm. The protein localises to the nucleus. Its function is as follows. Accessory component of both the DNA polymerase delta complex and the DNA polymerase zeta complex. As a component of the trimeric and tetrameric DNA polymerase delta complexes (Pol-delta3 and Pol-delta4, respectively), plays a role in high fidelity genome replication, including in lagging strand synthesis, and repair. Required for optimal Pol-delta activity. Stabilizes the Pol-delta complex and plays a major role in Pol-delta stimulation by PCNA. Pol-delta3 and Pol-delta4 are characterized by the absence or the presence of POLD4. They exhibit differences in catalytic activity. Most notably, Pol-delta3 shows higher proofreading activity than Pol-delta4. Although both Pol-delta3 and Pol-delta4 process Okazaki fragments in vitro, Pol-delta3 may also be better suited to fulfill this task, exhibiting near-absence of strand displacement activity compared to Pol-delta4 and stalling on encounter with the 5'-blocking oligonucleotides. Pol-delta3 idling process may avoid the formation of a gap, while maintaining a nick that can be readily ligated. Along with DNA polymerase kappa, DNA polymerase delta carries out approximately half of nucleotide excision repair (NER) synthesis following UV irradiation. In this context, POLD3, along with PCNA and RFC1-replication factor C complex, is required to recruit POLD1, the catalytic subunit of the polymerase delta complex, to DNA damage sites. Under conditions of DNA replication stress, required for the repair of broken replication forks through break-induced replication (BIR). Involved in the translesion synthesis (TLS) of templates carrying O6-methylguanine or abasic sites performed by Pol-delta4, independently of DNA polymerase zeta (REV3L) or eta (POLH). Facilitates abasic site bypass by DNA polymerase delta by promoting extension from the nucleotide inserted opposite the lesion. Also involved in TLS, as a component of the tetrameric DNA polymerase zeta complex. Along with POLD2, dramatically increases the efficiency and processivity of DNA synthesis of the DNA polymerase zeta complex compared to the minimal zeta complex, consisting of only REV3L and REV7. The sequence is that of DNA polymerase delta subunit 3 (POLD3) from Bos taurus (Bovine).